Here is an 861-residue protein sequence, read N- to C-terminus: Leucine--tRNA ligase (861 aa).

The 'HIGH' region motif lies at 42-52 (PYPSGRIHMGH). A 'KMSKS' region motif is present at residues 623–627 (KMSKS). K626 serves as a coordination point for ATP.

The protein belongs to the class-I aminoacyl-tRNA synthetase family.

It localises to the cytoplasm. The catalysed reaction is tRNA(Leu) + L-leucine + ATP = L-leucyl-tRNA(Leu) + AMP + diphosphate. The sequence is that of Leucine--tRNA ligase from Caulobacter vibrioides (strain ATCC 19089 / CIP 103742 / CB 15) (Caulobacter crescentus).